The primary structure comprises 238 residues: Gas vesicle protein F (238 aa).

This sequence belongs to the gas vesicle GvpF/GvpL family. Binds GvpA.

The protein resides in the gas vesicle. In terms of biological role, a minor component of the gas vesicle, may be involved in preventing GvpA aggregation during gas vesicle nucleation. Gas vesicles are hollow, gas filled proteinaceous nanostructures found in some microorganisms. It is not clear what function gas vesicles perform in soil bacteria. In Streptomyces sp. (strain CB03234), this protein is Gas vesicle protein F.